A 554-amino-acid chain; its full sequence is Beta-eudesmol synthase (554 aa).

Positions 305, 309, and 456 each coordinate Mg(2+). Positions 305–309 match the DDXXD motif motif; sequence DDIYD.

Belongs to the terpene synthase family. Mg(2+) serves as cofactor. The cofactor is Mn(2+). As to expression, expressed in rhizomes. Detected in stems, but not in leaves.

Its subcellular location is the cytoplasm. The enzyme catalyses (2E,6E)-farnesyl diphosphate + H2O = beta-eudesmol + diphosphate. The catalysed reaction is (2E,6E)-farnesyl diphosphate + H2O = 10-epi-gamma-eudesmol + diphosphate. It carries out the reaction (2E,6E)-farnesyl diphosphate + H2O = alpha-eudesmol + diphosphate. The protein operates within secondary metabolite biosynthesis; terpenoid biosynthesis. Involved in the biosynthesis of beta-eudesmol, a sesquiterpene with antifungal activity and responsible for resistance of plants to ant attack. Produces mainly beta-eudesmol, but also smaller amounts of 10-epi-gamma-eudesmol, alpha-eudesmol and aristolene. The sequence is that of Beta-eudesmol synthase (ZSS2) from Zingiber zerumbet (Shampoo ginger).